We begin with the raw amino-acid sequence, 223 residues long: Small ribosomal subunit protein uS3 (223 aa).

The KH type-2 domain maps to 39 to 107 (VREFLHKKLA…PVQINIEEVR (69 aa)).

It belongs to the universal ribosomal protein uS3 family. In terms of assembly, part of the 30S ribosomal subunit. Forms a tight complex with proteins S10 and S14.

Functionally, binds the lower part of the 30S subunit head. Binds mRNA in the 70S ribosome, positioning it for translation. The chain is Small ribosomal subunit protein uS3 from Francisella tularensis subsp. novicida (strain U112).